A 143-amino-acid polypeptide reads, in one-letter code: Crossover junction endodeoxyribonuclease Hjc (143 aa).

Glu11 contacts Mg(2+). The active site involves Ser31. Mg(2+) is bound by residues Asp41 and Glu54.

The protein belongs to the Holliday junction resolvase Hjc family. As to quaternary structure, homodimer. Requires Mg(2+) as cofactor.

It catalyses the reaction Endonucleolytic cleavage at a junction such as a reciprocal single-stranded crossover between two homologous DNA duplexes (Holliday junction).. A structure-specific endonuclease that resolves Holliday junction (HJ) intermediates during genetic recombination. Cleaves 4-way DNA junctions introducing paired nicks in opposing strands, leaving a 5'-terminal phosphate and a 3'-terminal hydroxyl group that are ligated to produce recombinant products. Functionally, redundant function with Holliday junction resolvase Hje. In Sulfolobus acidocaldarius (strain ATCC 33909 / DSM 639 / JCM 8929 / NBRC 15157 / NCIMB 11770), this protein is Crossover junction endodeoxyribonuclease Hjc.